We begin with the raw amino-acid sequence, 203 residues long: Histidine biosynthesis bifunctional protein HisIE (203 aa).

The phosphoribosyl-AMP cyclohydrolase stretch occupies residues 1–108 (MELDFDKMNG…GEKNEEPVMF (108 aa)). The phosphoribosyl-ATP pyrophosphohydrolase stretch occupies residues 109–203 (LKALQDFIDK…ERHSSTWKKH (95 aa)).

It in the N-terminal section; belongs to the PRA-CH family. The protein in the C-terminal section; belongs to the PRA-PH family.

The protein localises to the cytoplasm. The enzyme catalyses 1-(5-phospho-beta-D-ribosyl)-ATP + H2O = 1-(5-phospho-beta-D-ribosyl)-5'-AMP + diphosphate + H(+). It catalyses the reaction 1-(5-phospho-beta-D-ribosyl)-5'-AMP + H2O = 1-(5-phospho-beta-D-ribosyl)-5-[(5-phospho-beta-D-ribosylamino)methylideneamino]imidazole-4-carboxamide. The protein operates within amino-acid biosynthesis; L-histidine biosynthesis; L-histidine from 5-phospho-alpha-D-ribose 1-diphosphate: step 2/9. Its pathway is amino-acid biosynthesis; L-histidine biosynthesis; L-histidine from 5-phospho-alpha-D-ribose 1-diphosphate: step 3/9. This Bacteroides thetaiotaomicron (strain ATCC 29148 / DSM 2079 / JCM 5827 / CCUG 10774 / NCTC 10582 / VPI-5482 / E50) protein is Histidine biosynthesis bifunctional protein HisIE.